Consider the following 149-residue polypeptide: Large ribosomal subunit protein bL9 (149 aa).

This sequence belongs to the bacterial ribosomal protein bL9 family.

Functionally, binds to the 23S rRNA. This chain is Large ribosomal subunit protein bL9, found in Helicobacter pylori (strain P12).